The following is a 292-amino-acid chain: Phosphoribosylglycinamide formyltransferase, chloroplastic (292 aa).

Residues 1 to 65 (MESRVLFSSQ…KAASSTPQIV (65 aa)) constitute a chloroplast transit peptide. Residue 88-90 (GSN) coordinates N(1)-(5-phospho-beta-D-ribosyl)glycinamide. (6R)-10-formyltetrahydrofolate is bound by residues 167 to 170 (LKLI) and Asn184. His186 acts as the Proton donor in catalysis. Asp227 provides a ligand contact to (6R)-10-formyltetrahydrofolate. N(1)-(5-phospho-beta-D-ribosyl)glycinamide is bound at residue Glu256.

This sequence belongs to the GART family.

It is found in the plastid. Its subcellular location is the chloroplast. The catalysed reaction is N(1)-(5-phospho-beta-D-ribosyl)glycinamide + (6R)-10-formyltetrahydrofolate = N(2)-formyl-N(1)-(5-phospho-beta-D-ribosyl)glycinamide + (6S)-5,6,7,8-tetrahydrofolate + H(+). It functions in the pathway purine metabolism; IMP biosynthesis via de novo pathway; N(2)-formyl-N(1)-(5-phospho-D-ribosyl)glycinamide from N(1)-(5-phospho-D-ribosyl)glycinamide (10-formyl THF route): step 1/1. The protein is Phosphoribosylglycinamide formyltransferase, chloroplastic (PUR3) of Arabidopsis thaliana (Mouse-ear cress).